The chain runs to 126 residues: Fatty acid-binding protein 10-A, liver basic (126 aa).

K57, K77, H99, and Q101 together coordinate cholate.

The protein belongs to the calycin superfamily. Fatty-acid binding protein (FABP) family. Expressed in the developing embryonic liver from 48 hpf. Also expressed in the liver of 5-day-old larvae. In adults, primarily expressed in the liver, with weak expression in the testis and intestine.

The protein resides in the cytoplasm. Binds hydrophobic ligands, such as cholate, in the cytoplasm. May be involved in intracellular lipid transport. Binds one cholate per subunit. The chain is Fatty acid-binding protein 10-A, liver basic (fabp10a) from Danio rerio (Zebrafish).